The sequence spans 703 residues: 1,4-alpha-glucan-branching enzyme (703 aa).

The (1,4-alpha-D-glucosyl)n site is built by tryptophan 93 and lysine 130. The active-site Nucleophile is aspartate 355. Glutamate 415 (proton donor) is an active-site residue.

The protein belongs to the glycosyl hydrolase 13 family. GlgB subfamily.

It is found in the cytoplasm. It catalyses the reaction Transfers a segment of a (1-&gt;4)-alpha-D-glucan chain to a primary hydroxy group in a similar glucan chain.. It participates in glycan biosynthesis; glycogen biosynthesis. In terms of biological role, glycogen-branching enzyme participates in the glycogen biosynthetic process along with glycogenin and glycogen synthase. Generates alpha-1,6-glucosidic branches from alpha-1,4-linked glucose chains, to increase solubility of the glycogen polymer. This chain is 1,4-alpha-glucan-branching enzyme (GLC3), found in Eremothecium gossypii (strain ATCC 10895 / CBS 109.51 / FGSC 9923 / NRRL Y-1056) (Yeast).